Reading from the N-terminus, the 960-residue chain is Phosphoenolpyruvate carboxylase 1 (960 aa).

At serine 7 the chain carries Phosphoserine. Active-site residues include histidine 168 and lysine 596.

The protein belongs to the PEPCase type 1 family. Homotetramer. Mg(2+) serves as cofactor.

The protein localises to the cytoplasm. The enzyme catalyses oxaloacetate + phosphate = phosphoenolpyruvate + hydrogencarbonate. It participates in photosynthesis; C3 acid pathway. With respect to regulation, by light-reversible phosphorylation. Functionally, through the carboxylation of phosphoenolpyruvate (PEP) it forms oxaloacetate, a four-carbon dicarboxylic acid source for the tricarboxylic acid cycle. This Sorghum bicolor (Sorghum) protein is Phosphoenolpyruvate carboxylase 1 (PEPC).